Consider the following 219-residue polypeptide: 7-cyano-7-deazaguanine synthase (219 aa).

10-20 (FSGGQDSTTCL) is a binding site for ATP. The Zn(2+) site is built by cysteine 188, cysteine 196, cysteine 199, and cysteine 202.

The protein belongs to the QueC family. Requires Zn(2+) as cofactor.

It catalyses the reaction 7-carboxy-7-deazaguanine + NH4(+) + ATP = 7-cyano-7-deazaguanine + ADP + phosphate + H2O + H(+). The protein operates within purine metabolism; 7-cyano-7-deazaguanine biosynthesis. In terms of biological role, catalyzes the ATP-dependent conversion of 7-carboxy-7-deazaguanine (CDG) to 7-cyano-7-deazaguanine (preQ(0)). This is 7-cyano-7-deazaguanine synthase from Neisseria gonorrhoeae (strain NCCP11945).